The following is a 472-amino-acid chain: Glutamate--tRNA ligase 2 (472 aa).

The short motif at 10 to 20 (PSPTGYLHIGG) is the 'HIGH' region element. C99, C101, C126, and D128 together coordinate Zn(2+). The span at 112 to 130 (EQQARKEKPRYDGRCRDLD) shows a compositional bias: basic and acidic residues. The interval 112 to 137 (EQQARKEKPRYDGRCRDLDGPPSEEV) is disordered. The short motif at 240 to 244 (RLSKR) is the 'KMSKS' region element. K243 lines the ATP pocket.

This sequence belongs to the class-I aminoacyl-tRNA synthetase family. Glutamate--tRNA ligase type 1 subfamily. In terms of assembly, monomer. The cofactor is Zn(2+).

The protein resides in the cytoplasm. The enzyme catalyses tRNA(Glu) + L-glutamate + ATP = L-glutamyl-tRNA(Glu) + AMP + diphosphate. Functionally, catalyzes the attachment of glutamate to tRNA(Glu) in a two-step reaction: glutamate is first activated by ATP to form Glu-AMP and then transferred to the acceptor end of tRNA(Glu). The chain is Glutamate--tRNA ligase 2 from Halorhodospira halophila (strain DSM 244 / SL1) (Ectothiorhodospira halophila (strain DSM 244 / SL1)).